The sequence spans 684 residues: UvrABC system protein B (684 aa).

The 389-residue stretch at 32–420 (DGVLRGDRWQ…GGVVVEQLIR (389 aa)) folds into the Helicase ATP-binding domain. An ATP-binding site is contributed by 45-52 (GVTGSGKT). The Beta-hairpin signature appears at 98-121 (YYDFYQPEAYIPSLDKYIAKDLKI). Residues 437–603 (QIDHLLARIR…SIIKSVDQVL (167 aa)) enclose the Helicase C-terminal domain. The 36-residue stretch at 643-678 (MLMVAEMNAEMQKAAEQTDYEKAAYLRDEILMLQER) folds into the UVR domain.

This sequence belongs to the UvrB family. As to quaternary structure, forms a heterotetramer with UvrA during the search for lesions. Interacts with UvrC in an incision complex.

Its subcellular location is the cytoplasm. Functionally, the UvrABC repair system catalyzes the recognition and processing of DNA lesions. A damage recognition complex composed of 2 UvrA and 2 UvrB subunits scans DNA for abnormalities. Upon binding of the UvrA(2)B(2) complex to a putative damaged site, the DNA wraps around one UvrB monomer. DNA wrap is dependent on ATP binding by UvrB and probably causes local melting of the DNA helix, facilitating insertion of UvrB beta-hairpin between the DNA strands. Then UvrB probes one DNA strand for the presence of a lesion. If a lesion is found the UvrA subunits dissociate and the UvrB-DNA preincision complex is formed. This complex is subsequently bound by UvrC and the second UvrB is released. If no lesion is found, the DNA wraps around the other UvrB subunit that will check the other stand for damage. This is UvrABC system protein B from Chlorobaculum tepidum (strain ATCC 49652 / DSM 12025 / NBRC 103806 / TLS) (Chlorobium tepidum).